The following is a 768-amino-acid chain: Phosphoribosylformylglycinamidine synthase subunit PurL (768 aa).

H44 is an active-site residue. Residues Y47 and K86 each contribute to the ATP site. E88 serves as a coordination point for Mg(2+). Residues 89-92 and R111 each bind substrate; that span reads SHNH. The Proton acceptor role is filled by H90. D112 contributes to the Mg(2+) binding site. Q235 provides a ligand contact to substrate. D263 contacts Mg(2+). Residue 307 to 309 participates in substrate binding; it reads ESQ. ATP-binding residues include D518 and G555. N556 lines the Mg(2+) pocket. S558 contributes to the substrate binding site.

It belongs to the FGAMS family. In terms of assembly, monomer. Part of the FGAM synthase complex composed of 1 PurL, 1 PurQ and 2 PurS subunits.

It localises to the cytoplasm. The enzyme catalyses N(2)-formyl-N(1)-(5-phospho-beta-D-ribosyl)glycinamide + L-glutamine + ATP + H2O = 2-formamido-N(1)-(5-O-phospho-beta-D-ribosyl)acetamidine + L-glutamate + ADP + phosphate + H(+). It participates in purine metabolism; IMP biosynthesis via de novo pathway; 5-amino-1-(5-phospho-D-ribosyl)imidazole from N(2)-formyl-N(1)-(5-phospho-D-ribosyl)glycinamide: step 1/2. Part of the phosphoribosylformylglycinamidine synthase complex involved in the purines biosynthetic pathway. Catalyzes the ATP-dependent conversion of formylglycinamide ribonucleotide (FGAR) and glutamine to yield formylglycinamidine ribonucleotide (FGAM) and glutamate. The FGAM synthase complex is composed of three subunits. PurQ produces an ammonia molecule by converting glutamine to glutamate. PurL transfers the ammonia molecule to FGAR to form FGAM in an ATP-dependent manner. PurS interacts with PurQ and PurL and is thought to assist in the transfer of the ammonia molecule from PurQ to PurL. The protein is Phosphoribosylformylglycinamidine synthase subunit PurL of Synechococcus sp. (strain JA-2-3B'a(2-13)) (Cyanobacteria bacterium Yellowstone B-Prime).